Reading from the N-terminus, the 148-residue chain is Natriuretic peptide BF131 (148 aa).

The signal sequence occupies residues 1 to 27 (MVGPSRLAGGGLLLLLLLALLPLALDG). The propeptide occupies 28 to 83 (KPAPPPQALPKDPAAASAAERIMRALLPDSKSSRPATDRMVHPEHQAGGGDTRRLQ). Disordered stretches follow at residues 54-83 (LPDS…RRLQ) and 105-127 (TSDM…PSAA). The segment covering 63–83 (ATDRMVHPEHQAGGGDTRRLQ) has biased composition (basic and acidic residues). Cysteines 94 and 110 form a disulfide. Positions 130-148 (AVTWLIRDLRADSKQSRAA) are excised as a propeptide.

It belongs to the natriuretic peptide family. In terms of tissue distribution, expressed by the venom gland.

The protein localises to the secreted. Natriuretic peptide that dose-dependently induces the rapid relaxation of rat aortic strips phenylephrine-precontracted. Acts by stimulating cGMP production in a dose-dependent manner (by probably activating NPR1 and/or NPR2). May also show potent hypotensive effects. In Bungarus flaviceps flaviceps (Red-headed krait), this protein is Natriuretic peptide BF131.